We begin with the raw amino-acid sequence, 914 residues long: Translation initiation factor IF-2 (914 aa).

Disordered regions lie at residues 52-84 (GGGK…VKAP) and 98-326 (AGGN…GVRL). The span at 57-68 (AEGAAKAPAKAA) shows a compositional bias: low complexity. The segment covering 69 to 84 (AKGDAKTAAKGDVKAP) has biased composition (basic and acidic residues). The segment covering 98–138 (AGGNGEAAAPPAQPGGTATTPAAQATPEAPARPGPAAARPS) has biased composition (low complexity). Pro residues-rich tracts occupy residues 139-169 (APAP…PAPK) and 193-207 (PRPV…PGAP). Positions 236 to 296 (RPGGGRPGGP…GAAGAFGRPG (61 aa)) are enriched in gly residues. Basic residues predominate over residues 300–309 (RRGRKSKRQK). Residues 421-581 (TRPPVVTVMG…AVLLTADAAL (161 aa)) form the tr-type G domain. Residues 430–437 (GHVDHGKT), 469–473 (DTPGH), and 523–526 (NKID) contribute to the GTP site.

It belongs to the TRAFAC class translation factor GTPase superfamily. Classic translation factor GTPase family. IF-2 subfamily.

It is found in the cytoplasm. In terms of biological role, one of the essential components for the initiation of protein synthesis. Protects formylmethionyl-tRNA from spontaneous hydrolysis and promotes its binding to the 30S ribosomal subunits. Also involved in the hydrolysis of GTP during the formation of the 70S ribosomal complex. The chain is Translation initiation factor IF-2 from Mycobacterium avium (strain 104).